A 336-amino-acid chain; its full sequence is MMRLLFVFFMVHTIFIPCFSFDTPGKDLPLTLDYYKSTCPTVFDVIKKEMECIVKEDPRNAAIIIRLHFHDCFVQGCDGSVLLDETETLQGEKKASPNINSLKGYKIVDRIKNIIESECPGVVSCADLLTIGARDATILVGGPYWDVPVGRKDSKTASYELATTNLPTPEEGLISIIAKFYSQGLSVEDMVALIGAHTIGKAQCRNFRSRIYGDFQVTSALNPVSETYLASLREICPASSGEGDSNVTAIDNVTPNLFDNSIYHTLLRGEGLLNSDQEMYTSLFGIQTRRIVSKYAEDPVAFFEQFSKSMVKMGNILNSESLADGEVRRNCRFVNT.

A signal peptide spans 1 to 20; that stretch reads MMRLLFVFFMVHTIFIPCFS. Cystine bridges form between Cys39/Cys119, Cys72/Cys77, Cys125/Cys331, and Cys204/Cys236. Catalysis depends on His70, which acts as the Proton acceptor. Positions 71, 74, 76, 78, and 80 each coordinate Ca(2+). Pro167 lines the substrate pocket. His197 is a heme b binding site. Residue Thr198 coordinates Ca(2+). N-linked (GlcNAc...) asparagine glycosylation is present at Asn246. Positions 251, 254, and 259 each coordinate Ca(2+).

It belongs to the peroxidase family. Classical plant (class III) peroxidase subfamily. Heme b serves as cofactor. It depends on Ca(2+) as a cofactor. Expressed in roots and stems.

Its subcellular location is the secreted. The enzyme catalyses 2 a phenolic donor + H2O2 = 2 a phenolic radical donor + 2 H2O. Functionally, removal of H(2)O(2), oxidation of toxic reductants, biosynthesis and degradation of lignin, suberization, auxin catabolism, response to environmental stresses such as wounding, pathogen attack and oxidative stress. These functions might be dependent on each isozyme/isoform in each plant tissue. This is Peroxidase 11 (PER11) from Arabidopsis thaliana (Mouse-ear cress).